Reading from the N-terminus, the 301-residue chain is L-threonate dehydrogenase (301 aa).

NAD(+) is bound by residues 6 to 34 (YSVA…TYGI) and threonine 101. The active site involves lysine 177. Lysine 245 lines the NAD(+) pocket.

Belongs to the HIBADH-related family. L-threonate dehydrogenase subfamily.

The catalysed reaction is L-threonate + NAD(+) = 2-dehydro-L-erythronate + NADH + H(+). In terms of biological role, catalyzes oxidation of L-threonate to 2-oxo-tetronate. Can use either NAD(+) or NADP(+) as cosubstrate, with a preference for NAD(+). This is L-threonate dehydrogenase from Haemophilus influenzae (strain ATCC 51907 / DSM 11121 / KW20 / Rd).